The chain runs to 567 residues: Membrane protein insertase YidC (567 aa).

Residues 3–23 (IQRIVLFAGLAIVSYLMVLAW) traverse the membrane as a helical segment. The tract at residues 32–80 (TEQVAEAQSSSDSSATNSTDDMILPEDNNAGGEEFATPETGSLASTSAN) is disordered. The segment covering 40-52 (SSSDSSATNSTDD) has biased composition (low complexity). Positions 70–80 (ETGSLASTSAN) are enriched in polar residues. The next 5 membrane-spanning stretches (helical) occupy residues 354 to 374 (FGWL…FYGL), 378 to 398 (WGVA…HLSA), 445 to 465 (GGCL…WVLF), 485 to 505 (MDPY…QMSL), and 522 to 542 (PLIF…YWLV).

It belongs to the OXA1/ALB3/YidC family. Type 1 subfamily. In terms of assembly, interacts with the Sec translocase complex via SecD. Specifically interacts with transmembrane segments of nascent integral membrane proteins during membrane integration.

It is found in the cell inner membrane. Its function is as follows. Required for the insertion and/or proper folding and/or complex formation of integral membrane proteins into the membrane. Involved in integration of membrane proteins that insert both dependently and independently of the Sec translocase complex, as well as at least some lipoproteins. Aids folding of multispanning membrane proteins. This chain is Membrane protein insertase YidC, found in Marinobacter nauticus (strain ATCC 700491 / DSM 11845 / VT8) (Marinobacter aquaeolei).